Reading from the N-terminus, the 126-residue chain is Large ribosomal subunit protein mL52 (126 aa).

Residues 1 to 28 constitute a mitochondrion transit peptide; it reads MLKITKICLASSATSTAQRSIALTAPRA.

It belongs to the mitochondrion-specific ribosomal protein mL52 family. In terms of assembly, component of the mitochondrial ribosome large subunit (39S) which comprises a 16S rRNA and about 50 distinct proteins.

The protein localises to the mitochondrion. This chain is Large ribosomal subunit protein mL52 (mRpL52), found in Drosophila melanogaster (Fruit fly).